We begin with the raw amino-acid sequence, 308 residues long: MNEEKNYELWLDNYFFKPNFWQKCLAFILLPLSVLYAFFAILNTFFRKKIVFKKPVISVGNLSFGGNGKTPLCKAIAREFDGVFIVLRGYKRKSKGLFVVKNQNEILCTLTQSGDEAMEYAFEENIKGVIVSEDRVKGIEKAFELGAKIVVLDDAFSKFHIKKFDILLESKIKPYFNFTLPSGAYRLPKFYEKRADFIALEGRDFVRYSFVKENPKAVLVTAIAKPFRLYEHFIKARACYFFKDHYEFKKEELENLLKKHNCDTLMLTFKDFVKVKDFGFKCQIIELNIELKDSLREKIKTYIKEFEQ.

Position 63-70 (63-70) interacts with ATP; the sequence is SFGGNGKT.

Belongs to the LpxK family.

It catalyses the reaction a lipid A disaccharide + ATP = a lipid IVA + ADP + H(+). It participates in glycolipid biosynthesis; lipid IV(A) biosynthesis; lipid IV(A) from (3R)-3-hydroxytetradecanoyl-[acyl-carrier-protein] and UDP-N-acetyl-alpha-D-glucosamine: step 6/6. Its function is as follows. Transfers the gamma-phosphate of ATP to the 4'-position of a tetraacyldisaccharide 1-phosphate intermediate (termed DS-1-P) to form tetraacyldisaccharide 1,4'-bis-phosphate (lipid IVA). The polypeptide is Tetraacyldisaccharide 4'-kinase (Campylobacter jejuni subsp. jejuni serotype O:2 (strain ATCC 700819 / NCTC 11168)).